Reading from the N-terminus, the 450-residue chain is MEQAPPDPERQLQPAPLEPLGSPDAVLGAAVGKETEGAGEESSGVDTMTHNNFWLKKIEISVSEAEKRTGRNAMNMQETYTAYLIETRSIEHTDGQSVLTDSLWRRYSEFELLRSYLLVYYPHIVVPPLPEKRAEFVWHKLSADNMDPDFVERRRIGLENFLLRIASHPLLCRDKIFYLFLTQEGNWKETVNETGFQLKADSRLKALNATFRVKNPDKRFTDLKHYSDELQSVISHLLRVRARVADRLYGVYKVHGNYGRVFSEWSAIEKEMGDGLQSAGHHMDVYASSIDDILEDEEHYADQLKEYLFYAEALRAVCRKHELMQYDLEMAAQDLASKKQQCEELATGTVRTFSLKGMTTKLFGQETPEQREARIKVLEEQINEGEQQLKSKNLEGREFVKNAWADIERFKEQKNRDLKEALISYAVMQISMCKKGIQVWTNAKECFSKM.

M1 is modified (N-acetylmethionine). The interval 1–46 (MEQAPPDPERQLQPAPLEPLGSPDAVLGAAVGKETEGAGEESSGVD) is disordered. The residue at position 22 (S22) is a Phosphoserine. The PX domain occupies 61-187 (SVSEAEKRTG…YLFLTQEGNW (127 aa)). A 1,2-diacyl-sn-glycero-3-phospho-(1D-myo-inositol-3-phosphate) contacts are provided by R106, S108, K132, and R154.

Belongs to the sorting nexin family. Heterodimer; heterodimerizes with SNX7 or SNX30. Interacts with WWC1/KIBRA. Identified in a complex with WWC1/KIBRA and dynein components DYNLL1 and DYNC1I2. Interacts with BIN1.

Its subcellular location is the early endosome. The protein resides in the early endosome membrane. Functionally, involved in the regulation of endocytosis and in several stages of intracellular trafficking. Plays a role in recycling endocytosed transferrin receptor and prevent its degradation. Involved in autophagosome assembly by regulating trafficking and recycling of phospholipid scramblase ATG9A. This Pongo abelii (Sumatran orangutan) protein is Sorting nexin-4.